A 1553-amino-acid chain; its full sequence is DNA topoisomerase 2-alpha (1553 aa).

Positions 1-25 (MELLDSPAPLRPLHDNPRLPKADGA) are disordered. The segment covering 12 to 25 (PLHDNPRLPKADGA) has biased composition (basic and acidic residues). ATP contacts are provided by residues N92, N121, 149-151 (SSN), and 162-169 (GRNGYGAK). Positions 343 to 345 (KKK) are interaction with DNA. Residue 377 to 379 (QTK) coordinates ATP. The region spanning 456-573 (CTLILTEGDS…SLLRHNFLEE (118 aa)) is the Toprim domain. The Mg(2+) site is built by E462, D542, and D544. The region spanning 716 to 1163 (IPSLVDGLKP…SPSDLWKEDL (448 aa)) is the Topo IIA-type catalytic domain. The active-site O-(5'-phospho-DNA)-tyrosine intermediate is Y806. Positions 991–1000 (KLQTNLTCNS) are interaction with DNA. 2 disordered regions span residues 1095–1114 (QNKEEEEGDESGEESAAATG) and 1186–1553 (TGKP…DDMF). The span at 1098 to 1107 (EEEEGDESGE) shows a compositional bias: acidic residues. Basic and acidic residues predominate over residues 1242-1262 (SEKNESDEKQEGNSSGDKEPS). Composition is skewed to acidic residues over residues 1300–1310 (SESDSESDDFE) and 1334–1349 (SDADLTSSDEDSEYQE). A compositionally biased stretch (basic and acidic residues) spans 1371 to 1385 (VPKEKKGKAPKEKPL). A compositionally biased stretch (low complexity) spans 1413–1432 (PRAQAVPKKPAAAKKGSTAK). Basic residues predominate over residues 1444-1454 (KKKAAPKAPRR). The span at 1517 to 1532 (SIDLTADSPAAAAPRT) shows a compositional bias: low complexity.

This sequence belongs to the type II topoisomerase family. Homodimer. Mg(2+) is required as a cofactor. The cofactor is Mn(2+). Ca(2+) serves as cofactor.

The protein localises to the cytoplasm. It is found in the nucleus. Its subcellular location is the nucleoplasm. It localises to the nucleolus. The catalysed reaction is ATP-dependent breakage, passage and rejoining of double-stranded DNA.. In terms of biological role, key decatenating enzyme that alters DNA topology by binding to two double-stranded DNA molecules, generating a double-stranded break in one of the strands, passing the intact strand through the broken strand, and religating the broken strand. May play a role in the regulation of circadian rhythm. In Gallus gallus (Chicken), this protein is DNA topoisomerase 2-alpha (TOP2A).